The chain runs to 456 residues: tRNA-2-methylthio-N(6)-dimethylallyladenosine synthase (456 aa).

The 119-residue stretch at 18–136 folds into the MTTase N-terminal domain; it reads EFFFIQTFGC…FPEYLHRVQV (119 aa). Residues Cys27, Cys63, Cys97, Cys173, Cys177, and Cys180 each coordinate [4Fe-4S] cluster. The Radical SAM core domain occupies 159 to 391; sequence RKSNVKAFVT…AVNEGIVVGN (233 aa). The TRAM domain occupies 392–455; that stretch reads KAAEGKIYEV…SFSLVGEVVE (64 aa).

The protein belongs to the methylthiotransferase family. MiaB subfamily. Monomer. [4Fe-4S] cluster serves as cofactor.

The protein resides in the cytoplasm. It carries out the reaction N(6)-dimethylallyladenosine(37) in tRNA + (sulfur carrier)-SH + AH2 + 2 S-adenosyl-L-methionine = 2-methylsulfanyl-N(6)-dimethylallyladenosine(37) in tRNA + (sulfur carrier)-H + 5'-deoxyadenosine + L-methionine + A + S-adenosyl-L-homocysteine + 2 H(+). Catalyzes the methylthiolation of N6-(dimethylallyl)adenosine (i(6)A), leading to the formation of 2-methylthio-N6-(dimethylallyl)adenosine (ms(2)i(6)A) at position 37 in tRNAs that read codons beginning with uridine. This Clostridium botulinum (strain Alaska E43 / Type E3) protein is tRNA-2-methylthio-N(6)-dimethylallyladenosine synthase.